A 111-amino-acid chain; its full sequence is Large ribosomal subunit protein uL22 (111 aa).

It belongs to the universal ribosomal protein uL22 family. In terms of assembly, part of the 50S ribosomal subunit.

Functionally, this protein binds specifically to 23S rRNA; its binding is stimulated by other ribosomal proteins, e.g. L4, L17, and L20. It is important during the early stages of 50S assembly. It makes multiple contacts with different domains of the 23S rRNA in the assembled 50S subunit and ribosome. In terms of biological role, the globular domain of the protein is located near the polypeptide exit tunnel on the outside of the subunit, while an extended beta-hairpin is found that lines the wall of the exit tunnel in the center of the 70S ribosome. The polypeptide is Large ribosomal subunit protein uL22 (Legionella pneumophila (strain Lens)).